Consider the following 305-residue polypeptide: uncharacterized protein (305 aa).

The ABC transporter domain maps to 5–233 (LELKNVTKNI…ENDTYFFQVE (229 aa)). Residue 37–44 (GPNGAGKT) participates in ATP binding.

It belongs to the ABC transporter superfamily.

This is an uncharacterized protein from Bacillus subtilis (strain 168).